A 271-amino-acid polypeptide reads, in one-letter code: Putative pyruvate, phosphate dikinase regulatory protein (271 aa).

Residue 147–154 participates in ADP binding; it reads GLSRTSKT.

The protein belongs to the pyruvate, phosphate/water dikinase regulatory protein family. PDRP subfamily.

It catalyses the reaction N(tele)-phospho-L-histidyl/L-threonyl-[pyruvate, phosphate dikinase] + ADP = N(tele)-phospho-L-histidyl/O-phospho-L-threonyl-[pyruvate, phosphate dikinase] + AMP + H(+). The catalysed reaction is N(tele)-phospho-L-histidyl/O-phospho-L-threonyl-[pyruvate, phosphate dikinase] + phosphate + H(+) = N(tele)-phospho-L-histidyl/L-threonyl-[pyruvate, phosphate dikinase] + diphosphate. Bifunctional serine/threonine kinase and phosphorylase involved in the regulation of the pyruvate, phosphate dikinase (PPDK) by catalyzing its phosphorylation/dephosphorylation. This Clostridium tetani (strain Massachusetts / E88) protein is Putative pyruvate, phosphate dikinase regulatory protein.